A 285-amino-acid polypeptide reads, in one-letter code: CBY1-interacting BAR domain-containing protein 1-B (285 aa).

Residues 1 to 48 (MSQTPEARTRDNQTRQIQESVNNVEKHFGELCQIFAGYVRKTARLRDK) constitute a mitochondrion transit peptide. The segment at 11–221 (DNQTRQIQES…DIDEEEDLEV (211 aa)) is BAR-like. Residues 142–184 (RQIISQAETELQRATMDAARISQQLEETIDNFEKQKIKDIKKL) adopt a coiled-coil conformation. The segment covering 241-261 (NSRSGSTSRAPSVISQPPGNR) has biased composition (polar residues). The segment at 241 to 285 (NSRSGSTSRAPSVISQPPGNRQKNRMEDDEDGEDDNDENSTEDEN) is disordered. A compositionally biased stretch (acidic residues) spans 267–285 (EDDEDGEDDNDENSTEDEN).

This sequence belongs to the CIBAR family.

Its subcellular location is the cytoplasm. It localises to the cytoskeleton. The protein localises to the microtubule organizing center. The protein resides in the centrosome. It is found in the centriole. Its subcellular location is the cell projection. It localises to the cilium. The protein localises to the nucleus. The protein resides in the mitochondrion inner membrane. It is found in the flagellum. In terms of biological role, plays a critical role in regulating mitochondrial ultrastructure and function by maintaining the integrity of mitochondrial morphology, particularly the organization of cristae. Plays a crucial role in ciliogenesis. Plays a key role in the correct positioning of the annulus, a septin-based ring structure in the sperm flagellum, serving both as a physical barrier and a membrane diffusion barrier that separates the midpiece (MP) from the principal piece (PP). This is CBY1-interacting BAR domain-containing protein 1-B from Xenopus laevis (African clawed frog).